The primary structure comprises 269 residues: Cytochrome c oxidase subunit 3 (269 aa).

Transmembrane regions (helical) follow at residues 21–41 (PWPMFTSFSLMNLALSLGLTA), 49–69 (MFMLLSTMTVLYSMTLWFKDI), 90–110 (GFLMFVVSEMLMFSSLFWAFL), 132–152 (ISAAELPLLNTMILLASGVTM), 167–187 (TLYGFAYSTLLMVLFVMFQGL), 205–225 (FFALTGLHGLHMMMLIMMLAM), and 247–267 (ILYLHVLDVMWLFMYMIVYWW).

This sequence belongs to the cytochrome c oxidase subunit 3 family. In terms of assembly, component of the cytochrome c oxidase (complex IV, CIV), a multisubunit enzyme composed of a catalytic core of 3 subunits and several supernumerary subunits. The complex exists as a monomer or a dimer and forms supercomplexes (SCs) in the inner mitochondrial membrane with ubiquinol-cytochrome c oxidoreductase (cytochrome b-c1 complex, complex III, CIII).

Its subcellular location is the mitochondrion inner membrane. The catalysed reaction is 4 Fe(II)-[cytochrome c] + O2 + 8 H(+)(in) = 4 Fe(III)-[cytochrome c] + 2 H2O + 4 H(+)(out). Functionally, component of the cytochrome c oxidase, the last enzyme in the mitochondrial electron transport chain which drives oxidative phosphorylation. The respiratory chain contains 3 multisubunit complexes succinate dehydrogenase (complex II, CII), ubiquinol-cytochrome c oxidoreductase (cytochrome b-c1 complex, complex III, CIII) and cytochrome c oxidase (complex IV, CIV), that cooperate to transfer electrons derived from NADH and succinate to molecular oxygen, creating an electrochemical gradient over the inner membrane that drives transmembrane transport and the ATP synthase. Cytochrome c oxidase is the component of the respiratory chain that catalyzes the reduction of oxygen to water. Electrons originating from reduced cytochrome c in the intermembrane space (IMS) are transferred via the dinuclear copper A center (CU(A)) of subunit 2 and heme A of subunit 1 to the active site in subunit 1, a binuclear center (BNC) formed by heme A3 and copper B (CU(B)). The BNC reduces molecular oxygen to 2 water molecules using 4 electrons from cytochrome c in the IMS and 4 protons from the mitochondrial matrix. The polypeptide is Cytochrome c oxidase subunit 3 (COX3) (Debaryomyces hansenii (strain ATCC 36239 / CBS 767 / BCRC 21394 / JCM 1990 / NBRC 0083 / IGC 2968) (Yeast)).